Consider the following 217-residue polypeptide: MITVALAKGALLKDSAARFAAAGLDFSAALDKDNRQLMLPTPCGRARALLVRNGDVPTYVAYGQAQLGVVGYDVLREHQLPVAQLVDLGFGGCRMAVAVKASSGYERAADLPPHCRVASKFTHCAREYFDGLDLPVELVHLNGSVELGPITGMSEAIVDLVATGRTLRDNGLVAIEDLFHTTARLVGHPLSMRLDDGSLNAIVEAVRTASAAAGAAG.

The protein belongs to the ATP phosphoribosyltransferase family. Short subfamily. Heteromultimer composed of HisG and HisZ subunits.

The protein resides in the cytoplasm. The catalysed reaction is 1-(5-phospho-beta-D-ribosyl)-ATP + diphosphate = 5-phospho-alpha-D-ribose 1-diphosphate + ATP. It functions in the pathway amino-acid biosynthesis; L-histidine biosynthesis; L-histidine from 5-phospho-alpha-D-ribose 1-diphosphate: step 1/9. Catalyzes the condensation of ATP and 5-phosphoribose 1-diphosphate to form N'-(5'-phosphoribosyl)-ATP (PR-ATP). Has a crucial role in the pathway because the rate of histidine biosynthesis seems to be controlled primarily by regulation of HisG enzymatic activity. The chain is ATP phosphoribosyltransferase from Parasynechococcus marenigrum (strain WH8102).